A 455-amino-acid chain; its full sequence is Differentiation-associated protein 1 (455 aa).

The first 21 residues, 1–21 (MKFKLFLLVFFVFLLPYLSQS), serve as a signal peptide directing secretion. The disordered stretch occupies residues 349–434 (IGSSSSSSSS…SDDDLGNPSS (86 aa)). The span at 351–423 (SSSSSSSSSS…KSNHTSSESS (73 aa)) shows a compositional bias: low complexity. Serine 433 carries the GPI-like-anchor amidated serine lipid modification. Positions 434 to 455 (SSSILSVSKLIILLISIILYCF) are cleaved as a propeptide — removed in mature form.

The protein resides in the cell membrane. Its function is as follows. Plays a role in differentiation. This chain is Differentiation-associated protein 1 (dia1), found in Dictyostelium discoideum (Social amoeba).